The chain runs to 370 residues: 3 beta-hydroxysteroid dehydrogenase/Delta 5--&gt;4-isomerase (370 aa).

The active-site Proton acceptor is Tyr158. NAD(+) is bound at residue Lys162.

It belongs to the 3-beta-HSD family. Monomer.

The protein resides in the cytoplasm. The enzyme catalyses a 3beta-hydroxy-Delta(5)-steroid + NAD(+) = a 3-oxo-Delta(5)-steroid + NADH + H(+). It carries out the reaction cholesterol + NAD(+) = cholest-5-en-3-one + NADH + H(+). It catalyses the reaction pregnenolone + NAD(+) = pregn-5-ene-3,20-dione + NADH + H(+). The catalysed reaction is 3beta-hydroxyandrost-5-en-17-one + NAD(+) = androst-5-ene-3,17-dione + NADH + H(+). The enzyme catalyses a 3-oxo-Delta(5)-steroid = a 3-oxo-Delta(4)-steroid. It carries out the reaction cholest-5-en-3-one = cholest-4-en-3-one. It catalyses the reaction pregn-5-ene-3,20-dione = progesterone. The catalysed reaction is androst-5-ene-3,17-dione = androst-4-ene-3,17-dione. Its pathway is lipid metabolism; steroid biosynthesis. Its function is as follows. 3-beta-HSD is a bifunctional enzyme, that catalyzes the oxidation and isomerization of cholesterol, pregnenolone, and dehydroepiandrosterone (DHEA) into cholest-4-en-3-one, progesterone, and androsterone, respectively. This Mycobacterium tuberculosis (strain CDC 1551 / Oshkosh) protein is 3 beta-hydroxysteroid dehydrogenase/Delta 5--&gt;4-isomerase.